The primary structure comprises 146 residues: Snake venom vascular endothelial growth factor toxin (146 aa).

The first 24 residues, 1–24 (MAVYLLAVAILFCIQGWPLGTVQG), serve as a signal peptide directing secretion. Glutamine 25 carries the pyrrolidone carboxylic acid modification. Cystine bridges form between cysteine 38-cysteine 80, cysteine 69-cysteine 115, and cysteine 73-cysteine 117. The segment at 118–146 (RPRSASGVNSRKHKRNPEEGEPRAKFPFV) is disordered. Over residues 133-146 (NPEEGEPRAKFPFV) the composition is skewed to basic and acidic residues.

It belongs to the PDGF/VEGF growth factor family. Snake venom VEGF subfamily. As to quaternary structure, homodimer; disulfide-linked. Interacts with VEGF receptor-1 (FLT1) with a high affinity, whereas it binds to VEGF receptor-2 (KDR) with a low affinity. Does not bind VEGF receptor-3 (FLT4). In terms of tissue distribution, expressed by the venom gland.

Its subcellular location is the secreted. Its function is as follows. Snake venom VEGFs that may contribute to venom dispersion and prey subjugation by inducing vascular permeability and hypotension. This protein induces an increase in capillary permeability after intradermal injection, as well as a drastic hypotensive effect after intravenous injection. The hypotension is mediated by nitric oxide (NO), which is produced by VEGF-activated endothelium NO synthase. Also induces angiogenesis in vitro. Like other crotalid VEGFs, this protein interacts with VEGF receptor-1 (FLT1) with a high affinity, whereas it binds to VEGF receptor-2 (KDR) with a low affinity. This Bothrops jararaca (Jararaca) protein is Snake venom vascular endothelial growth factor toxin.